Reading from the N-terminus, the 97-residue chain is Protein SENESCENCE-ASSOCIATED GENE 21, mitochondrial (97 aa).

A mitochondrion-targeting transit peptide spans 1-46 (MARSISNVKIVSAFVSRELSNAIFRRGYAATAAQGSVSSGGRSGAV).

This sequence belongs to the LEA type 3 family. As to expression, expressed in roots, stems leaves and flowers, but not in seeds. In short days, observed in cotyledons and roots but absent from rosette leaves.

It localises to the mitochondrion. Functionally, mediates tolerance to oxidative stresses (e.g. hydrogen peroxide H(2)O(2), diamide, menadione and tert-butyl hydroperoxide) by minimizing the negative effects of oxidation and monitoring photosynthesis during stress. Promotes root development. Prevents premature aging (e.g. senescence and flowering). Involved in resistance against compatible pathogens such as Botrytis cinerea and Pseudomonas syringae pv. tomato. The sequence is that of Protein SENESCENCE-ASSOCIATED GENE 21, mitochondrial from Arabidopsis thaliana (Mouse-ear cress).